The following is a 914-amino-acid chain: Protein ECT2 (914 aa).

Position 2 is an N-acetylalanine (alanine 2). BRCT domains are found at residues leucine 171 to aspartate 260 and phenylalanine 266 to tyrosine 354. Threonine 359 carries the post-translational modification Phosphothreonine; by PKC/PRKCI. Residues serine 367 and serine 370 each carry the phosphoserine modification. Residue threonine 373 is modified to Phosphothreonine; by CDK1. At serine 376 the chain carries Phosphoserine. 2 short sequence motifs (nuclear localization signal) span residues arginine 378–arginine 382 and proline 401–proline 405. A disordered region spans residues alanine 388–lysine 449. The segment covering aspartate 418–tyrosine 429 has biased composition (polar residues). Low complexity predominate over residues threonine 432–lysine 449. Phosphothreonine; by CDK1 is present on threonine 444. In terms of domain architecture, DH spans alanine 452–aspartate 641. A Glycyl lysine isopeptide (Lys-Gly) (interchain with G-Cter in SUMO2) cross-link involves residue lysine 611. The PH domain occupies arginine 675–threonine 794. A phosphoserine mark is found at serine 716 and serine 842. Position 846 is a phosphothreonine; by CDK1 (threonine 846). Residues threonine 857–leucine 884 are disordered. A phosphoserine mark is found at serine 861 and serine 866.

Homodimer. Homooligomer. Found in the centralspindlin complex. Interacts with NR1I3. Interacts (Thr-359 phosphorylated form) with PARD6A; the interaction is observed in cancer cells. Interacts (Thr-359 phosphorylated form) with PRKCI; the interaction is observed in cancer cells. Interacts with PKP4; the interaction is observed at the midbody. Interacts with RACGAP1/CYK4; the interaction is direct, occurs in a microtubule-dependent manner, occurs at anaphase and during cytokinesis, is inhibited in metaphase by phosphorylation of ECT2 on Thr-373 and is stimulated in early anaphase by dephosphorylation of ECT2 probably on Thr-373 through CDK1 activity. Interacts with PLK1; the interaction is stimulated upon its phosphorylation on Thr-444. Interacts with RHOA; the interaction results in allosteric activation of ECT2. Interacts with KIF23, PARD3, PARD6B and PRKCQ. Interacts with NEDD9/HEF1. Post-translationally, phosphorylated by PLK1 in vitro. Hyperphosphorylated during the G2 phase of the cell cycle. Phosphorylation at Thr-373 occurs during the G2/M phase, relieves its auto-inhibition status and stimulates its GEF activity. Phosphorylation at Thr-444 in G2/M phase is required for subsequent binding with PLK1 and Rho exchange activation. Dephosphorylated at the time of cytokinesis. Phosphorylation at Thr-359 is required for its transformation activity in cancer cells. In terms of tissue distribution, expressed in lung epithelial cells (at protein level). Expressed in squamous cell carcinoma, primary non-small cell lung cancer tumors and lung adenocarcinoma.

It is found in the nucleus. It localises to the cytoplasm. The protein resides in the cytoskeleton. The protein localises to the spindle. Its subcellular location is the cleavage furrow. It is found in the midbody. It localises to the cell junction. The protein resides in the tight junction. The protein localises to the microtubule organizing center. Its subcellular location is the centrosome. Autoinhibited by the C-terminal PH domain which folds back and binds to the surface of the DH domain, blocking binding of RHOA to the catalytic center of the DH domain. The 2nd BRCT domain is also involved in inhibition, probably by helping to impede RHOA binding. Allosterically activated by binding of activated GTP-bound RHOA to the PH domain which stimulates the release of PH inhibition and promotes the binding of substrate RHOA to the catalytic center. Binding of phosphorylated RACGAP1 to the N-terminal BRCT domain-containing region also releases autoinhibition. Functionally, guanine nucleotide exchange factor (GEF) that catalyzes the exchange of GDP for GTP. Promotes guanine nucleotide exchange on the Rho family members of small GTPases, like RHOA, RHOC, RAC1 and CDC42. Required for signal transduction pathways involved in the regulation of cytokinesis. Component of the centralspindlin complex that serves as a microtubule-dependent and Rho-mediated signaling required for the myosin contractile ring formation during the cell cycle cytokinesis. Regulates the translocation of RHOA from the central spindle to the equatorial region. Plays a role in the control of mitotic spindle assembly; regulates the activation of CDC42 in metaphase for the process of spindle fibers attachment to kinetochores before chromosome congression. Involved in the regulation of epithelial cell polarity; participates in the formation of epithelial tight junctions in a polarity complex PARD3-PARD6-protein kinase PRKCQ-dependent manner. Plays a role in the regulation of neurite outgrowth. Inhibits phenobarbital (PB)-induced NR1I3 nuclear translocation. Stimulates the activity of RAC1 through its association with the oncogenic PARD6A-PRKCI complex in cancer cells, thereby acting to coordinately drive tumor cell proliferation and invasion. Also stimulates genotoxic stress-induced RHOB activity in breast cancer cells leading to their cell death. This is Protein ECT2 from Homo sapiens (Human).